The chain runs to 362 residues: Probable non-structural 41.0 kDa protein (362 aa).

The tract at residues 341–362 is disordered; that stretch reads MNAAAPSAPTPTELPVFSPPSS.

The protein is Probable non-structural 41.0 kDa protein (S6) of Maize rough dwarf virus (MRDV).